The sequence spans 701 residues: Elongation factor G (701 aa).

The region spanning 11–287 (NKVRNIGIMA…AVVDYLPSPL (277 aa)) is the tr-type G domain. GTP is bound by residues 20 to 27 (AHIDAGKT), 84 to 88 (DTPGH), and 138 to 141 (NKMD).

The protein belongs to the TRAFAC class translation factor GTPase superfamily. Classic translation factor GTPase family. EF-G/EF-2 subfamily.

It is found in the cytoplasm. Its function is as follows. Catalyzes the GTP-dependent ribosomal translocation step during translation elongation. During this step, the ribosome changes from the pre-translocational (PRE) to the post-translocational (POST) state as the newly formed A-site-bound peptidyl-tRNA and P-site-bound deacylated tRNA move to the P and E sites, respectively. Catalyzes the coordinated movement of the two tRNA molecules, the mRNA and conformational changes in the ribosome. In Mycobacterium sp. (strain JLS), this protein is Elongation factor G.